Consider the following 464-residue polypeptide: Serine--tRNA synthetase-like protein Slimp (464 aa).

It belongs to the class-II aminoacyl-tRNA synthetase family. Type-1 seryl-tRNA synthetase subfamily.

The protein resides in the mitochondrion. Functionally, essential protein which may play a role in mitochondrial morphogenesis and function. Has transfer RNA (tRNA)-binding activity and can bind tRNA(Ser) but does not have serine--tRNA ligase activity and does not bind ATP. The protein is Serine--tRNA synthetase-like protein Slimp of Drosophila melanogaster (Fruit fly).